We begin with the raw amino-acid sequence, 917 residues long: Protein translocase subunit SecA (917 aa).

ATP contacts are provided by residues Gln-87, 105-109, and Asp-516; that span reads GEGKT. Zn(2+)-binding residues include Cys-901, Cys-903, Cys-912, and His-913.

The protein belongs to the SecA family. In terms of assembly, monomer and homodimer. Part of the essential Sec protein translocation apparatus which comprises SecA, SecYEG and auxiliary proteins SecDF-YajC and YidC. Zn(2+) serves as cofactor.

It is found in the cell inner membrane. The protein resides in the cytoplasm. It catalyses the reaction ATP + H2O + cellular proteinSide 1 = ADP + phosphate + cellular proteinSide 2.. Its function is as follows. Part of the Sec protein translocase complex. Interacts with the SecYEG preprotein conducting channel. Has a central role in coupling the hydrolysis of ATP to the transfer of proteins into and across the cell membrane, serving both as a receptor for the preprotein-SecB complex and as an ATP-driven molecular motor driving the stepwise translocation of polypeptide chains across the membrane. In Acidovorax sp. (strain JS42), this protein is Protein translocase subunit SecA.